The following is a 248-amino-acid chain: Probable transcriptional regulatory protein Desal_2886 (248 aa).

The disordered stretch occupies residues 1 to 21 (MAGHSKWANIQHRKGRQDAKR).

Belongs to the TACO1 family.

Its subcellular location is the cytoplasm. The protein is Probable transcriptional regulatory protein Desal_2886 of Maridesulfovibrio salexigens (strain ATCC 14822 / DSM 2638 / NCIMB 8403 / VKM B-1763) (Desulfovibrio salexigens).